We begin with the raw amino-acid sequence, 88 residues long: Small integral membrane protein 13 (88 aa).

The helical transmembrane segment at 10–30 (LVFVATLLIVLLLMVCGWYFV) threads the bilayer. The span at 48 to 61 (TGSQEGDNEQPSGS) shows a compositional bias: polar residues. The interval 48 to 88 (TGSQEGDNEQPSGSETEEDPSASPQKIRSARQRRPPVDAGH) is disordered. Phosphoserine is present on residues serine 59 and serine 61. Residue threonine 63 is modified to Phosphothreonine. Phosphoserine is present on serine 70.

It belongs to the SMIM13 family.

It localises to the membrane. The sequence is that of Small integral membrane protein 13 (Smim13) from Mus musculus (Mouse).